A 399-amino-acid polypeptide reads, in one-letter code: Cell division protein FtsZ (399 aa).

Residues 18–22, 105–107, Glu136, Arg140, and Asp184 contribute to the GTP site; these read GGGVN and GTG. The tract at residues 311–399 is disordered; the sequence is GFDGGQPPSK…EELDVPDFLK (89 aa). Acidic residues predominate over residues 388-399; that stretch reads AAEELDVPDFLK.

Belongs to the FtsZ family. Homodimer. Polymerizes to form a dynamic ring structure in a strictly GTP-dependent manner. Interacts directly with several other division proteins.

The protein resides in the cytoplasm. Its function is as follows. Essential cell division protein that forms a contractile ring structure (Z ring) at the future cell division site. The regulation of the ring assembly controls the timing and the location of cell division. One of the functions of the FtsZ ring is to recruit other cell division proteins to the septum to produce a new cell wall between the dividing cells. Binds GTP and shows GTPase activity. In Streptomyces coelicolor (strain ATCC BAA-471 / A3(2) / M145), this protein is Cell division protein FtsZ.